The following is a 160-amino-acid chain: Cytochrome b6-f complex subunit 4 (160 aa).

3 helical membrane-spanning segments follow: residues 36–56 (LLYTFPVCILGTIGCLVGLAV), 95–115 (LLGVVLMAGVPAGLLTVPFIE), and 131–151 (TVFLIGTVVAVWLGIGATLPI).

This sequence belongs to the cytochrome b family. PetD subfamily. As to quaternary structure, the 4 large subunits of the cytochrome b6-f complex are cytochrome b6, subunit IV (17 kDa polypeptide, petD), cytochrome f and the Rieske protein, while the 4 small subunits are petG, petL, petM and petN. The complex functions as a dimer.

The protein resides in the plastid. Its subcellular location is the chloroplast thylakoid membrane. Functionally, component of the cytochrome b6-f complex, which mediates electron transfer between photosystem II (PSII) and photosystem I (PSI), cyclic electron flow around PSI, and state transitions. The chain is Cytochrome b6-f complex subunit 4 from Mesostigma viride (Green alga).